A 377-amino-acid polypeptide reads, in one-letter code: Glutamate 5-kinase (377 aa).

An ATP-binding site is contributed by Lys-20. Ser-60, Asp-147, and Asn-159 together coordinate substrate. 179–180 (TD) serves as a coordination point for ATP. A PUA domain is found at 285-363 (AGRLVIDDGA…DKVYQVLGEA (79 aa)).

The protein belongs to the glutamate 5-kinase family.

The protein localises to the cytoplasm. The catalysed reaction is L-glutamate + ATP = L-glutamyl 5-phosphate + ADP. The protein operates within amino-acid biosynthesis; L-proline biosynthesis; L-glutamate 5-semialdehyde from L-glutamate: step 1/2. Functionally, catalyzes the transfer of a phosphate group to glutamate to form L-glutamate 5-phosphate. This Acinetobacter baumannii (strain AB307-0294) protein is Glutamate 5-kinase.